A 300-amino-acid polypeptide reads, in one-letter code: Formylmethanofuran--tetrahydromethanopterin formyltransferase-like protein (300 aa).

This sequence belongs to the FTR family.

The sequence is that of Formylmethanofuran--tetrahydromethanopterin formyltransferase-like protein from Methanopyrus kandleri (strain AV19 / DSM 6324 / JCM 9639 / NBRC 100938).